A 955-amino-acid polypeptide reads, in one-letter code: 2-oxoglutarate dehydrogenase E1 component (955 aa).

The protein belongs to the alpha-ketoglutarate dehydrogenase family. Homodimer. Part of the 2-oxoglutarate dehydrogenase (OGDH) complex composed of E1 (2-oxoglutarate dehydrogenase), E2 (dihydrolipoamide succinyltransferase) and E3 (dihydrolipoamide dehydrogenase); the complex contains multiple copies of the three enzymatic components (E1, E2 and E3). The cofactor is thiamine diphosphate.

The catalysed reaction is N(6)-[(R)-lipoyl]-L-lysyl-[protein] + 2-oxoglutarate + H(+) = N(6)-[(R)-S(8)-succinyldihydrolipoyl]-L-lysyl-[protein] + CO2. In terms of biological role, E1 component of the 2-oxoglutarate dehydrogenase (OGDH) complex which catalyzes the decarboxylation of 2-oxoglutarate, the first step in the conversion of 2-oxoglutarate to succinyl-CoA and CO(2). This is 2-oxoglutarate dehydrogenase E1 component from Bacillus cereus (strain AH820).